Reading from the N-terminus, the 105-residue chain is Fungal protease inhibitor-1 (105 aa).

An N-terminal signal peptide occupies residues 1-19; that stretch reads MKAVITLLFLACILVVTYG. 6 disulfides stabilise this stretch: Cys23/Cys56, Cys28/Cys58, Cys33/Cys59, Cys42/Cys62, Cys72/Cys93, and Cys87/Cys98.

Functionally, inhibits proteases from the fungi A.oryzae and R.oryzae, trypsin and chymotrypsin. Does not inhibit protease from the bacterium B.licheniformis or papain. This Antheraea mylitta (Tasar silkworm) protein is Fungal protease inhibitor-1.